The sequence spans 324 residues: NADH-quinone oxidoreductase subunit H 2 (324 aa).

9 helical membrane-spanning segments follow: residues Met1–Val21, Ile77–Gly97, Val109–Ala129, Leu147–Leu167, Val179–Ala199, Leu214–Glu234, Val238–Trp258, Leu263–Ile283, and Phe298–Val318.

This sequence belongs to the complex I subunit 1 family. In terms of assembly, NDH-1 is composed of 14 different subunits. Subunits NuoA, H, J, K, L, M, N constitute the membrane sector of the complex.

The protein localises to the cell inner membrane. The catalysed reaction is a quinone + NADH + 5 H(+)(in) = a quinol + NAD(+) + 4 H(+)(out). In terms of biological role, NDH-1 shuttles electrons from NADH, via FMN and iron-sulfur (Fe-S) centers, to quinones in the respiratory chain. The immediate electron acceptor for the enzyme in this species is believed to be ubiquinone. Couples the redox reaction to proton translocation (for every two electrons transferred, four hydrogen ions are translocated across the cytoplasmic membrane), and thus conserves the redox energy in a proton gradient. This subunit may bind ubiquinone. The chain is NADH-quinone oxidoreductase subunit H 2 from Rhodopseudomonas palustris (strain BisB18).